A 1664-amino-acid polypeptide reads, in one-letter code: Peroxisome proliferator-activated receptor gamma coactivator-related protein 1 (1664 aa).

7 disordered regions span residues 1 to 44 (MAAR…GTLG), 167 to 255 (LLTL…VASF), 436 to 555 (PVVP…EGPL), 681 to 701 (VDPVLVKSRPTDPRRGAVSSA), 735 to 793 (IESG…ADIP), 818 to 873 (CLVP…PTPP), and 1045 to 1068 (HGAPQTEPTKVEVKPVPASPHPKH). Residues 12–22 (APPPSGGPGPD) show a composition bias toward pro residues. Residues 23–32 (PGGGARGSGW) show a composition bias toward gly residues. Over residues 201–224 (SLPDPSWDFSPPSFLETSSPKLPS) the composition is skewed to low complexity. Ser-237 carries the phosphoserine modification. The tract at residues 433-467 (VVEPVVPKEPQNPPANAAPGSQRARKGRKKKSKEQ) is necessary for interaction with CREB1 and NRF1 and for transcriptional coactivation. The span at 455-464 (RARKGRKKKS) shows a compositional bias: basic residues. Residues 482 to 499 (SSRGQSTVGTEVTSQVDN) show a composition bias toward polar residues. Residues 522 to 531 (RAWARAWAAA) are compositionally biased toward low complexity. Residues 533–549 (ENSSPKNLERSAGQSSP) are compositionally biased toward polar residues. Ser-536 and Ser-548 each carry phosphoserine. The segment covering 823-836 (GPSPASPSPEPPVS) has biased composition (pro residues). Residues 862–873 (VQSVSPAVPTPP) are compositionally biased toward low complexity. Ser-1076 is subject to Phosphoserine. 3 disordered regions span residues 1093–1130 (EEPASERLKPETQETRPREKPPLPATKAVPTPRQSTVP), 1182–1209 (SEAKKECPPPAPADSLAVGNSGGVDIPQ), and 1334–1528 (VLSL…DHYQ). Residues 1096 to 1113 (ASERLKPETQETRPREKP) show a composition bias toward basic and acidic residues. Low complexity predominate over residues 1365–1383 (PSAPCLAPSSLLSPEASPC). A necessary for interaction with CREB1 and NRF1 region spans residues 1379-1450 (EASPCRNDMN…SSSSSSSSSS (72 aa)). Residues 1400-1409 (RSMRCYRKAC) show a composition bias toward basic residues. A phosphoserine mark is found at Ser-1411 and Ser-1413. Composition is skewed to low complexity over residues 1427–1459 (SRSVSSGSNRTSEASSSSSSSSSSSRSRSRSLS) and 1468–1500 (SSCSSSGRSRRCSSSSSSSSSSSSSSSSSSSSR). Over residues 1501-1519 (SRSRSPSPRRRSDRRRRYS) the composition is skewed to basic residues. In terms of domain architecture, RRM spans 1543–1619 (RVVFIGKIPG…QPFDLCFGGR (77 aa)).

As to quaternary structure, interacts with CREB1 and NRF1. Strongly expressed in heart and skeletal muscle, moderately in lung, placenta, intestine, liver, kidney, spleen, thymus, colon and brain. Also expressed in several oncocytic thyroid tumors.

The protein resides in the nucleus. Its function is as follows. Acts as a coactivator during transcriptional activation of nuclear genes related to mitochondrial biogenesis and cell growth. Involved in the transcription coactivation of CREB and NRF1 target genes. This chain is Peroxisome proliferator-activated receptor gamma coactivator-related protein 1 (PPRC1), found in Homo sapiens (Human).